Reading from the N-terminus, the 394-residue chain is Cytohesin-4 (394 aa).

The stretch at Ser-12–Leu-65 forms a coiled coil. The SEC7 domain occupies Glu-54–Glu-241. The region spanning Asn-259–Thr-375 is the PH domain. Residues Lys-268–Thr-275, Arg-279, Tyr-290, and Arg-300 contribute to the a 1,2-diacyl-sn-glycero-3-phospho-(1D-myo-inositol-3,4,5-trisphosphate) site. The C-terminal autoinhibitory region stretch occupies residues Arg-386–Gln-394.

In terms of tissue distribution, expressed predominantly in peripheral blood leukocytes.

The protein resides in the cell membrane. Promotes guanine-nucleotide exchange on ARF1 and ARF5. Promotes the activation of ARF factors through replacement of GDP with GTP. The protein is Cytohesin-4 (CYTH4) of Homo sapiens (Human).